Consider the following 334-residue polypeptide: Glucokinase-like protein XF_1460 (334 aa).

Residue 18-23 (ADVGGT) coordinates ATP.

The protein belongs to the bacterial glucokinase family.

The polypeptide is Glucokinase-like protein XF_1460 (Xylella fastidiosa (strain 9a5c)).